The sequence spans 306 residues: Ribosomal protein L11 methyltransferase (306 aa).

Thr-154, Gly-179, Asp-201, and Asn-242 together coordinate S-adenosyl-L-methionine.

It belongs to the methyltransferase superfamily. PrmA family.

The protein localises to the cytoplasm. It catalyses the reaction L-lysyl-[protein] + 3 S-adenosyl-L-methionine = N(6),N(6),N(6)-trimethyl-L-lysyl-[protein] + 3 S-adenosyl-L-homocysteine + 3 H(+). In terms of biological role, methylates ribosomal protein L11. This chain is Ribosomal protein L11 methyltransferase, found in Xylella fastidiosa (strain 9a5c).